The following is a 774-amino-acid chain: 5-methyltetrahydropteroyltriglutamate--homocysteine methyltransferase (774 aa).

Residues 15–18 (RELK) and K116 each bind 5-methyltetrahydropteroyltri-L-glutamate. Residues 445–447 (IGS) and E498 contribute to the L-homocysteine site. L-methionine-binding positions include 445-447 (IGS) and E498. Residues 529–530 (RC) and W575 each bind 5-methyltetrahydropteroyltri-L-glutamate. Residue D613 coordinates L-homocysteine. D613 contributes to the L-methionine binding site. E619 contacts 5-methyltetrahydropteroyltri-L-glutamate. Zn(2+)-binding residues include H655, C657, and E679. The active-site Proton donor is H708. C740 contributes to the Zn(2+) binding site.

This sequence belongs to the vitamin-B12 independent methionine synthase family. Requires Zn(2+) as cofactor.

The enzyme catalyses 5-methyltetrahydropteroyltri-L-glutamate + L-homocysteine = tetrahydropteroyltri-L-glutamate + L-methionine. It functions in the pathway amino-acid biosynthesis; L-methionine biosynthesis via de novo pathway; L-methionine from L-homocysteine (MetE route): step 1/1. Functionally, catalyzes the transfer of a methyl group from 5-methyltetrahydrofolate to homocysteine resulting in methionine formation. This chain is 5-methyltetrahydropteroyltriglutamate--homocysteine methyltransferase, found in Flavobacterium johnsoniae (strain ATCC 17061 / DSM 2064 / JCM 8514 / BCRC 14874 / CCUG 350202 / NBRC 14942 / NCIMB 11054 / UW101) (Cytophaga johnsonae).